A 105-amino-acid chain; its full sequence is Large ribosomal subunit protein eL30 (105 aa).

Residues Lys22, Lys53, and Lys83 each participate in a glycyl lysine isopeptide (Lys-Gly) (interchain with G-Cter in ubiquitin) cross-link.

This sequence belongs to the eukaryotic ribosomal protein eL30 family. As to quaternary structure, component of the large ribosomal subunit (LSU). Mature yeast ribosomes consist of a small (40S) and a large (60S) subunit. The 40S small subunit contains 1 molecule of ribosomal RNA (18S rRNA) and 33 different proteins (encoded by 57 genes). The large 60S subunit contains 3 rRNA molecules (25S, 5.8S and 5S rRNA) and 46 different proteins (encoded by 81 genes).

It localises to the cytoplasm. Component of the ribosome, a large ribonucleoprotein complex responsible for the synthesis of proteins in the cell. The small ribosomal subunit (SSU) binds messenger RNAs (mRNAs) and translates the encoded message by selecting cognate aminoacyl-transfer RNA (tRNA) molecules. The large subunit (LSU) contains the ribosomal catalytic site termed the peptidyl transferase center (PTC), which catalyzes the formation of peptide bonds, thereby polymerizing the amino acids delivered by tRNAs into a polypeptide chain. The nascent polypeptides leave the ribosome through a tunnel in the LSU and interact with protein factors that function in enzymatic processing, targeting, and the membrane insertion of nascent chains at the exit of the ribosomal tunnel. This Saccharomyces cerevisiae (strain ATCC 204508 / S288c) (Baker's yeast) protein is Large ribosomal subunit protein eL30.